We begin with the raw amino-acid sequence, 389 residues long: Methane monooxygenase component A beta chain (389 aa).

As to quaternary structure, m.capsulatus has two forms of methane monooxygenase, a soluble and a membrane-bound type. The soluble type consists of four components (A to D): protein A, comprising three chains, in an alpha-2, beta-2, gamma-2 configuration, is a nonheme iron protein containing an unusual mu-hydroxo bridge structure at its active site and interacts with both oxygen and methane.

The catalysed reaction is methane + NADH + O2 + H(+) = methanol + NAD(+) + H2O. The enzyme catalyses methane + NADPH + O2 + H(+) = methanol + NADP(+) + H2O. In terms of biological role, responsible for the initial oxygenation of methane to methanol in methanotrophs. It also catalyzes the monohydroxylation of a variety of unactivated alkenes, alicyclic, aromatic and heterocyclic compounds. The sequence is that of Methane monooxygenase component A beta chain (mmoY) from Methylococcus capsulatus (strain ATCC 33009 / NCIMB 11132 / Bath).